We begin with the raw amino-acid sequence, 444 residues long: Protein kinase C and casein kinase substrate in neurons protein 1 (444 aa).

Phosphoserine occurs at positions 2 and 79. One can recognise an F-BAR domain in the interval Glu13–Asp283. Residues Lys26–Ile275 are a coiled coil. At Thr184 the chain carries Phosphothreonine. A disordered region spans residues Ala313–Asp384. The segment covering Ala314–Glu324 has biased composition (basic and acidic residues). The segment covering Glu336–Thr358 has biased composition (polar residues). Phosphoserine occurs at positions 346, 348, 349, 361, and 365. An SH3 domain is found at Ala385–Val444. Tyr394 carries the post-translational modification Phosphotyrosine. Phosphoserine occurs at positions 405 and 430.

The protein belongs to the PACSIN family. Homodimer. May form heterooligomers with other PACSINs. Interacts with MAPT. Interacts (via SH3 domain) with SYNJ1 and WASL. Interacts (via SH3 domain) with DNM1; the interaction is reduced by DNM1 phosphorylation. Interacts with DNM2 and DNM3. Interacts with both COBL and DBNL. Identified in a complex composed of COBL, PACSIN1 and WASL. Interacts with EHD1 and EHD3. Interacts with TRPV4. Phosphorylated by casein kinase 2 (CK2) and protein kinase C (PKC).

It localises to the cytoplasm. The protein localises to the cell projection. Its subcellular location is the synapse. The protein resides in the synaptosome. It is found in the ruffle membrane. It localises to the membrane. The protein localises to the cytoplasmic vesicle membrane. Its subcellular location is the cytosol. The protein resides in the cell membrane. Binds to membranes via its F-BAR domain and mediates membrane tubulation. Plays a role in the reorganization of the microtubule cytoskeleton via its interaction with MAPT; this decreases microtubule stability and inhibits MAPT-induced microtubule polymerization. Plays a role in cellular transport processes by recruiting DNM1, DNM2 and DNM3 to membranes. Plays a role in the reorganization of the actin cytoskeleton and in neuron morphogenesis via its interaction with COBL and WASL, and by recruiting COBL to the cell cortex. Plays a role in the regulation of neurite formation, neurite branching and the regulation of neurite length. Required for normal synaptic vesicle endocytosis; this process retrieves previously released neurotransmitters to accommodate multiple cycles of neurotransmission. Required for normal excitatory and inhibitory synaptic transmission. This Bos taurus (Bovine) protein is Protein kinase C and casein kinase substrate in neurons protein 1 (PACSIN1).